The primary structure comprises 309 residues: tRNA dimethylallyltransferase (309 aa).

An ATP-binding site is contributed by 11-18; that stretch reads GPTATGKS. Substrate is bound at residue 13-18; it reads TATGKS.

Belongs to the IPP transferase family. As to quaternary structure, monomer. Requires Mg(2+) as cofactor.

The enzyme catalyses adenosine(37) in tRNA + dimethylallyl diphosphate = N(6)-dimethylallyladenosine(37) in tRNA + diphosphate. Functionally, catalyzes the transfer of a dimethylallyl group onto the adenine at position 37 in tRNAs that read codons beginning with uridine, leading to the formation of N6-(dimethylallyl)adenosine (i(6)A). The chain is tRNA dimethylallyltransferase from Rhodococcus jostii (strain RHA1).